Reading from the N-terminus, the 236-residue chain is Cysteine-rich venom protein TRI1 (236 aa).

An N-terminal signal peptide occupies residues 1 to 18 (MIVFILLSLAAVLEQSFG). The region spanning 37-165 (VDRHNSFRRS…GYSYFYVCQY (129 aa)) is the SCP domain. Cystine bridges form between cysteine 74-cysteine 152, cysteine 91-cysteine 166, cysteine 147-cysteine 163, cysteine 185-cysteine 192, cysteine 188-cysteine 197, cysteine 201-cysteine 234, cysteine 210-cysteine 228, and cysteine 219-cysteine 232. The ShKT domain occupies 201–234 (CLREDKFTNCKSLVQQNSCQHDWTRKNCPATCFC).

Belongs to the CRISP family. In terms of tissue distribution, expressed by the venom gland.

It localises to the secreted. In terms of biological role, blocks contraction of smooth muscle elicited by high potassium-induced depolarization, but does not block caffeine-stimulated contraction. May target voltage-gated calcium channels on smooth muscle. The protein is Cysteine-rich venom protein TRI1 of Trimorphodon biscutatus (Western lyre snake).